The following is a 472-amino-acid chain: Probable sterol O-acyltransferase 2 (472 aa).

Position 12 is a phosphoserine (Ser12). 3 helical membrane passes run 61–81 (FTGF…MSFL), 111–131 (LAMS…ALGY), and 135–155 (YGLG…HCVL). An N-linked (GlcNAc...) asparagine glycan is attached at Asn161. Residues 170-190 (FILHSMVILMKLHSYNVVNGW) form a helical membrane-spanning segment. Asn233 carries N-linked (GlcNAc...) asparagine glycosylation. 2 helical membrane passes run 262–282 (IHYL…LVII) and 317–337 (TVAF…WVIF). An N-linked (GlcNAc...) asparagine glycan is attached at Asn342. Positions 355–361 (FYDDWWN) match the FYXDWWN motif motif. His409 is an active-site residue. The helical transmembrane segment at 452–472 (IAFWFSIIIGIALIAALYILF) threads the bilayer.

It belongs to the membrane-bound acyltransferase family. Sterol o-acyltransferase subfamily.

It is found in the endoplasmic reticulum membrane. In terms of biological role, sterol O-acyltransferase that catalyzes the formation of stery esters. This Schizosaccharomyces pombe (strain 972 / ATCC 24843) (Fission yeast) protein is Probable sterol O-acyltransferase 2 (are2).